A 236-amino-acid polypeptide reads, in one-letter code: Orotidine 5'-phosphate decarboxylase (236 aa).

Residues aspartate 17, lysine 39, 66–75 (DLKFHDIPNT), threonine 125, arginine 186, glutamine 195, glycine 215, and arginine 216 each bind substrate. Lysine 68 (proton donor) is an active-site residue.

This sequence belongs to the OMP decarboxylase family. Type 1 subfamily. As to quaternary structure, homodimer.

The enzyme catalyses orotidine 5'-phosphate + H(+) = UMP + CO2. It functions in the pathway pyrimidine metabolism; UMP biosynthesis via de novo pathway; UMP from orotate: step 2/2. In terms of biological role, catalyzes the decarboxylation of orotidine 5'-monophosphate (OMP) to uridine 5'-monophosphate (UMP). In Buchnera aphidicola subsp. Acyrthosiphon pisum (strain 5A), this protein is Orotidine 5'-phosphate decarboxylase.